Consider the following 291-residue polypeptide: 4-diphosphocytidyl-2-C-methyl-D-erythritol kinase (291 aa).

Lysine 10 is an active-site residue. An ATP-binding site is contributed by 99–109 (PMGGGLGGGSS). The active site involves aspartate 141.

The protein belongs to the GHMP kinase family. IspE subfamily. In terms of assembly, homodimer.

It catalyses the reaction 4-CDP-2-C-methyl-D-erythritol + ATP = 4-CDP-2-C-methyl-D-erythritol 2-phosphate + ADP + H(+). Its pathway is isoprenoid biosynthesis; isopentenyl diphosphate biosynthesis via DXP pathway; isopentenyl diphosphate from 1-deoxy-D-xylulose 5-phosphate: step 3/6. Its function is as follows. Catalyzes the phosphorylation of the position 2 hydroxy group of 4-diphosphocytidyl-2C-methyl-D-erythritol. The protein is 4-diphosphocytidyl-2-C-methyl-D-erythritol kinase of Photorhabdus laumondii subsp. laumondii (strain DSM 15139 / CIP 105565 / TT01) (Photorhabdus luminescens subsp. laumondii).